We begin with the raw amino-acid sequence, 1035 residues long: Valine--tRNA ligase (1035 aa).

The short motif at 45–55 (PNVTGALHLGH) is the 'HIGH' region element. Residues 253 to 281 (EKLSDANEKEAVDLNKQIEALQKRREERL) adopt a coiled-coil conformation. Residue K619 participates in ATP binding. Positions 967–1035 (DVEAELARLE…QDILKLQSKK (69 aa)) form a coiled coil.

It belongs to the class-I aminoacyl-tRNA synthetase family. ValS type 1 subfamily. In terms of assembly, monomer.

Its subcellular location is the cytoplasm. The catalysed reaction is tRNA(Val) + L-valine + ATP = L-valyl-tRNA(Val) + AMP + diphosphate. In terms of biological role, catalyzes the attachment of valine to tRNA(Val). As ValRS can inadvertently accommodate and process structurally similar amino acids such as threonine, to avoid such errors, it has a 'posttransfer' editing activity that hydrolyzes mischarged Thr-tRNA(Val) in a tRNA-dependent manner. The sequence is that of Valine--tRNA ligase from Rhodopirellula baltica (strain DSM 10527 / NCIMB 13988 / SH1).